The primary structure comprises 918 residues: Calcium-transporting ATPase type 2C member 1 (918 aa).

Residues 1–75 lie on the Cytoplasmic side of the membrane; sequence MKVARFQKIP…SEDEPLWKKY (75 aa). A helical transmembrane segment spans residues 76 to 96; it reads ISQFKNPLIMLLLASAVISVL. Residues 97–98 lie on the Extracellular side of the membrane; the sequence is MH. A helical transmembrane segment spans residues 99-119; the sequence is QFDDAVSITVAILIVVTVAFV. Topologically, residues 120-267 are cytoplasmic; that stretch reads QEYRSEKSLE…LQKSMDLLGK (148 aa). Residues 268 to 288 form a helical membrane-spanning segment; it reads QLSFYSFGIIGIIMLVGWLLG. Over 289–302 the chain is Extracellular; that stretch reads KDILEMFTISVSLA. The chain crosses the membrane as a helical span at residues 303–323; it reads VAAIPEGLPIVVTVTLALGVM. Over 324–703 the chain is Cytoplasmic; the sequence is RMVKKRAIVK…IYNNIKNFVR (380 aa). Asp-350 functions as the 4-aspartylphosphate intermediate in the catalytic mechanism. Asp-643 and Asp-647 together coordinate Mg(2+). A helical transmembrane segment spans residues 704–724; sequence FQLSTSIAALTLISLATLMNF. Over 725–732 the chain is Extracellular; sequence PNPLNAMQ. A helical transmembrane segment spans residues 733-753; that stretch reads ILWINIIMDGPPAQSLGVEPV. At 754 to 773 the chain is on the cytoplasmic side; that stretch reads DKDVIRKPPRNWKDSILTKN. A helical membrane pass occupies residues 774–794; the sequence is LILKILVSSIIIVCGTLFVFW. The Extracellular portion of the chain corresponds to 795-842; sequence RELRDNVITPRDTTMTFTCFVFFDMFNALSSRSQTKSVFEIGLCSNKM. Residues 843-863 form a helical membrane-spanning segment; it reads FCYAVLGSIMGQLLVIYFPPL. The Cytoplasmic segment spans residues 864 to 873; the sequence is QKVFQTESLS. Residues 874–894 traverse the membrane as a helical segment; sequence ILDLLFLLGLTSSVCIVAEII. Over 895-918 the chain is Extracellular; sequence KKVERSREKIQKHVSSTSSSFLEV.

Belongs to the cation transport ATPase (P-type) (TC 3.A.3) family. Type IIA subfamily. In terms of assembly, monomer. Homodimer.

The protein localises to the golgi apparatus. It localises to the trans-Golgi network membrane. It is found in the golgi stack membrane. The catalysed reaction is Ca(2+)(in) + ATP + H2O = Ca(2+)(out) + ADP + phosphate + H(+). The enzyme catalyses Mn(2+)(in) + ATP + H2O = Mn(2+)(out) + ADP + phosphate + H(+). In terms of biological role, ATP-driven pump that supplies the Golgi apparatus with Ca(2+) and Mn(2+) ions, both essential cofactors for processing and trafficking of newly synthesized proteins in the secretory pathway. Within a catalytic cycle, acquires Ca(2+) or Mn(2+) ions on the cytoplasmic side of the membrane and delivers them to the lumenal side. The transfer of ions across the membrane is coupled to ATP hydrolysis and is associated with a transient phosphorylation that shifts the pump conformation from inward-facing to outward-facing state. Plays a primary role in the maintenance of Ca(2+) homeostasis in the trans-Golgi compartment with a functional impact on Golgi and post-Golgi protein sorting as well as a structural impact on cisternae morphology. Responsible for loading the Golgi stores with Ca(2+) ions in keratinocytes, contributing to keratinocyte differentiation and epidermis integrity. Participates in Ca(2+) and Mn(2+) ions uptake into the Golgi store of hippocampal neurons and regulates protein trafficking required for neural polarity. May also play a role in the maintenance of Ca(2+) and Mn(2+) homeostasis and signaling in the cytosol while preventing cytotoxicity. In Pongo abelii (Sumatran orangutan), this protein is Calcium-transporting ATPase type 2C member 1 (ATP2C1).